An 808-amino-acid chain; its full sequence is Sucrose synthase isoform 1 (808 aa).

The GT-B glycosyltransferase stretch occupies residues 277 to 754 (MVFNVVILSP…GLKRIQEKYT (478 aa)).

It belongs to the glycosyltransferase 1 family. Plant sucrose synthase subfamily. Homotetramer. As to expression, expressed in stems, in roots at different developmental stages, and in flower buds, flowers and maturing seeds, with the highest levels in strong utilization sinks for sucrose such as growing stems and tap root tips.

It carries out the reaction an NDP-alpha-D-glucose + D-fructose = a ribonucleoside 5'-diphosphate + sucrose + H(+). With respect to regulation, fructose acts as a non-competitive inhibitor with an inhibition constant of 17.2 mM. In contrast, glucose inhibits uncompetitively with an inhibition constant of 4.3 mM. Functionally, sucrose-cleaving enzyme that provides UDP-glucose and fructose for various metabolic pathways. The protein is Sucrose synthase isoform 1 of Daucus carota (Wild carrot).